Consider the following 142-residue polypeptide: Large ribosomal subunit protein uL22c (142 aa).

Belongs to the universal ribosomal protein uL22 family. In terms of assembly, part of the 50S ribosomal subunit.

The protein localises to the plastid. It is found in the chloroplast. Its function is as follows. This protein binds specifically to 23S rRNA. Functionally, the globular domain of the protein is located near the polypeptide exit tunnel on the outside of the subunit, while an extended beta-hairpin is found that lines the wall of the exit tunnel in the center of the 70S ribosome. This Pinus thunbergii (Japanese black pine) protein is Large ribosomal subunit protein uL22c (rpl22).